The following is a 743-amino-acid chain: Merozoite surface protein 9 (743 aa).

Positions 1-23 (MMNMKIVLFSLLLFVIRWNIISC) are cleaved as a signal peptide. Residues 77–235 (KELLKEKQYT…VNDEDDVNDE (159 aa)) are interaction with MSP1 and host SLC4A1/Band 3. Disordered regions lie at residues 202 to 282 (KSQG…ATAY), 459 to 487 (DNQA…PTED), 512 to 540 (NNTP…ENFD), and 666 to 743 (VDAL…EESK). Residues 211–224 (SQNQNENNDNQKYQ) are compositionally biased toward polar residues. 8 consecutive repeat copies span residues 226-231 (VNDEDD), 232-237 (VNDEED), 238-243 (TNDDED), 244-249 (TNDEED), 250-255 (TNDDED), 256-261 (TNDDED), 262-267 (TNDEED), and 268-273 (TNDEED). The tract at residues 226–273 (VNDEDDVNDEEDTNDDEDTNDEEDTNDDEDTNDDEDTNDEEDTNDEED) is 8 X 6 AA tandem repeats of [VT]-N-D-[ED]-[ED]-D. Residues 226–274 (VNDEDDVNDEEDTNDDEDTNDEEDTNDDEDTNDDEDTNDEEDTNDEEDH) show a composition bias toward acidic residues. The interaction with MSP1 and host SLC4A1/Band 3 stretch occupies residues 364 to 528 (LKDNLINYEF…PPTQSKKKNK (165 aa)). The segment covering 459–473 (DNQAVDTKSMEEPKV) has biased composition (basic and acidic residues). Residues 512–521 (NNTPNVVPPT) are compositionally biased toward low complexity. The stretch at 644–732 (NQETEEEMEK…EEQEEEEEEI (89 aa)) forms a coiled coil. Residues 672-722 (KNKEEEEKEKEKEKEKEEKEKEEKEKEEKEKEKEEKEKEKEEKEEEKKEKE) show a composition bias toward basic and acidic residues. The span at 723–733 (EEQEEEEEEIV) shows a compositional bias: acidic residues.

This sequence belongs to the plasmodium ABRA family. Forms a complex composed of MSP1, MSP6, MSP7, MSP9 and MSP3; within the complex, MSP6 and MSP9 mediate the binding to the host erythrocyte. Interacts with MSP1 subunits p19 and p42; the interaction is direct. Interacts with host SLC4A1/Band 3 protein (via the 5ABC region). MSP1 subunits p19 or p42, and MSP9 form a co-ligand complex that interacts with host SLC4A1/Band 3 protein. Post-translationally, not glycosylated.

Its subcellular location is the cell membrane. The protein localises to the parasitophorous vacuole lumen. The protein resides in the secreted. Functionally, during the asexual blood stage, involved in the sialic acid-independent (SAID) merozoite invasion of host erythrocytes by binding to host SLC4A1/Band 3 protein on the surface of the host erythrocyte. This Plasmodium falciparum (isolate Camp / Malaysia) protein is Merozoite surface protein 9.